Consider the following 266-residue polypeptide: MKLSLSPPPYADAPVVVLISGLGGSGSYWLPQLAVLDQEYQVVCYDQRGTGNNPDTLAEDYSIAQMAAELHQALVAAGIERYAVVGHALGALVGMQLALDYPASVTVLVSVNGWLRINAHTRRCFQVREQLLHSGGAQAWVEALPLFLYPADWMAARAPRLEAEDALALAHFQGKNNLLRRLNALKRADFSHHADRIRCPVQIICASDDLLVPTACSSELHAALPDSQKMVMRYGGHACNVTDPETFNALLLNGLASLLHHREAAL.

The protein belongs to the AB hydrolase superfamily. Hydrolase RutD family.

The enzyme catalyses carbamate + 2 H(+) = NH4(+) + CO2. Its function is as follows. Involved in pyrimidine catabolism. May facilitate the hydrolysis of carbamate, a reaction that can also occur spontaneously. The protein is Putative carbamate hydrolase RutD of Escherichia coli O127:H6 (strain E2348/69 / EPEC).